The following is a 162-amino-acid chain: Gas vesicle protein I (162 aa).

The disordered stretch occupies residues 1–162; sequence MTGKQHQKHE…AERQRGGADE (162 aa). 2 stretches are compositionally biased toward basic and acidic residues: residues 22-37 and 47-64; these read INRD…QREK and RQSE…HDTQ. 2 stretches are compositionally biased toward polar residues: residues 65 to 74 and 81 to 110; these read SETQRGTQSK and TGGT…SHST. Composition is skewed to basic and acidic residues over residues 122 to 142 and 151 to 162; these read ARER…EDKS and PKAERQRGGADE.

Belongs to the gas vesicle GvpI family. In terms of assembly, gvpF to GvpM interact with each other in vitro, and may form multi-subunit complex(es). Interacts with GvpC and GvpO.

The protein localises to the gas vesicle. Functionally, proteins GvpF to GvpM might be involved in nucleating gas vesicle formation. A minor component of the gas vesicle. Gas vesicles are hollow, gas filled proteinaceous nanostructures found in some microorganisms. They allow positioning of halobacteria at the optimal depth for growth in the poorly aerated, shallow brine pools of their habitat. Expression of a 9.5 kb mc-vac DNA fragment containing 2 divergently transcribed regions (gvpD-gvpE-gvpF-gvpG-gvpH-gvpI-gvpJ-gvpK-gvpL-gvpM and gvpA-gvpC-gvpN-gvpO) allows H.volcanii to produce gas vesicles. The polypeptide is Gas vesicle protein I (Haloferax mediterranei (strain ATCC 33500 / DSM 1411 / JCM 8866 / NBRC 14739 / NCIMB 2177 / R-4) (Halobacterium mediterranei)).